A 499-amino-acid polypeptide reads, in one-letter code: Laccase (499 aa).

Plastocyanin-like domains are found at residues 2–127 and 139–281; these read VGPV…FVVY and VDND…ILRY. N-linked (GlcNAc...) asparagine glycans are attached at residues Asn51 and Asn54. Cu cation contacts are provided by His64, His66, His109, and His111. Cystine bridges form between Cys85-Cys488 and Cys117-Cys205. Tyr196 bears the 3'-nitrotyrosine mark. 4 N-linked (GlcNAc...) asparagine glycosylation sites follow: Asn208, Asn217, Asn292, and Asn333. In terms of domain architecture, Plastocyanin-like 3 spans 348–470; that stretch reads SVPVLLQILS…GGFAVVQAED (123 aa). At Tyr372 the chain carries 3'-nitrotyrosine. N-linked (GlcNAc...) asparagine glycosylation occurs at Asn377. Positions 395, 398, and 400 each coordinate Cu cation. Residues Asn416 and Asn436 are each glycosylated (N-linked (GlcNAc...) asparagine). Residues His452, Cys453, His454, and His458 each coordinate Cu cation.

This sequence belongs to the multicopper oxidase family. It depends on Cu cation as a cofactor.

It is found in the secreted. The enzyme catalyses 4 hydroquinone + O2 = 4 benzosemiquinone + 2 H2O. Lignin degradation and detoxification of lignin-derived products. The chain is Laccase from Trametes maxima (White-rot fungus).